A 152-amino-acid polypeptide reads, in one-letter code: Large ribosomal subunit protein bL9 (152 aa).

Belongs to the bacterial ribosomal protein bL9 family.

In terms of biological role, binds to the 23S rRNA. This chain is Large ribosomal subunit protein bL9, found in Synechococcus sp. (strain WH7803).